Here is a 94-residue protein sequence, read N- to C-terminus: Protein S100-A1 (94 aa).

EF-hand domains lie at 13–48 and 50–85; these read INVF…FLDA and KDVD…LTVA. Ca(2+)-binding residues include K28, E33, D63, N65, D67, E69, and E74. C86 is modified (S-nitrosocysteine).

Belongs to the S-100 family. Dimer of either two alpha chains, or two beta chains, or one alpha and one beta chain. Also forms heterodimers with S100P. Interacts with AGER. Interacts with CAPZA1. Interacts with FKBP4. Interacts with RYR1 and RYR2. Interacts with CACYBP in a calcium-dependent manner. Interacts with PPP5C (via TPR repeats); the interaction is calcium-dependent and modulates PPP5C activity. Interacts with ATP2A2 and PLN in a Ca(2+)-dependent manner. Interacts with mitochondrial F1-ATPase subunits ATP5F1A and ATP5F1B; these interactions increase F1-ATPase activity. Post-translationally, glutathionylated; glutathionylation increases affinity to calcium about 10-fold. In terms of tissue distribution, highly prevalent in heart. Also found in lesser quantities in skeletal muscle and brain.

The protein resides in the cytoplasm. The protein localises to the sarcoplasmic reticulum. It localises to the mitochondrion. In terms of biological role, small calcium binding protein that plays important roles in several biological processes such as Ca(2+) homeostasis, chondrocyte biology and cardiomyocyte regulation. In response to an increase in intracellular Ca(2+) levels, binds calcium which triggers conformational changes. These changes allow interactions with specific target proteins and modulate their activity. Regulates a network in cardiomyocytes controlling sarcoplasmic reticulum Ca(2+) cycling and mitochondrial function through interaction with the ryanodine receptors RYR1 and RYR2, sarcoplasmic reticulum Ca(2+)-ATPase/ATP2A2 and mitochondrial F1-ATPase. Facilitates diastolic Ca(2+) dissociation and myofilament mechanics in order to improve relaxation during diastole. The protein is Protein S100-A1 (S100A1) of Homo sapiens (Human).